The following is a 310-amino-acid chain: Phosphoribosylaminoimidazole-succinocarboxamide synthase (310 aa).

It belongs to the SAICAR synthetase family.

The enzyme catalyses 5-amino-1-(5-phospho-D-ribosyl)imidazole-4-carboxylate + L-aspartate + ATP = (2S)-2-[5-amino-1-(5-phospho-beta-D-ribosyl)imidazole-4-carboxamido]succinate + ADP + phosphate + 2 H(+). It functions in the pathway purine metabolism; IMP biosynthesis via de novo pathway; 5-amino-1-(5-phospho-D-ribosyl)imidazole-4-carboxamide from 5-amino-1-(5-phospho-D-ribosyl)imidazole-4-carboxylate: step 1/2. This Dechloromonas aromatica (strain RCB) protein is Phosphoribosylaminoimidazole-succinocarboxamide synthase.